A 226-amino-acid polypeptide reads, in one-letter code: Ribonuclease 3 (226 aa).

The RNase III domain occupies 7–134; it reads KQNLKKKYGI…FNGALFLDQG (128 aa). Glutamate 47 is a Mg(2+) binding site. Aspartate 51 is an active-site residue. Residues aspartate 120 and glutamate 123 each contribute to the Mg(2+) site. The active site involves glutamate 123. In terms of domain architecture, DRBM spans 160-226; that stretch reads DYKTELQERL…AAQAALDKNK (67 aa). A disordered region spans residues 201–226; that stretch reads KVSEGQGRNKKAAEQQAAQAALDKNK. Residues 214–226 are compositionally biased toward low complexity; that stretch reads EQQAAQAALDKNK.

The protein belongs to the ribonuclease III family. Homodimer. It depends on Mg(2+) as a cofactor.

It localises to the cytoplasm. The enzyme catalyses Endonucleolytic cleavage to 5'-phosphomonoester.. In terms of biological role, digests double-stranded RNA. Involved in the processing of primary rRNA transcript to yield the immediate precursors to the large and small rRNAs (23S and 16S). Processes some mRNAs, and tRNAs when they are encoded in the rRNA operon. Processes pre-crRNA and tracrRNA of type II CRISPR loci if present in the organism. The chain is Ribonuclease 3 from Lactobacillus johnsonii (strain CNCM I-12250 / La1 / NCC 533).